The primary structure comprises 279 residues: Lyso-glycine lipid O-acyltransferase (279 aa).

The protein belongs to the O-acyltransferase GlsA family.

It catalyses the reaction a lyso-glycine lipid + a fatty acyl-[ACP] = a glycine lipid + holo-[ACP]. The enzyme catalyses N-[(3R)-3-hydroxyhexadecanoyl]-glycine + hexadecanoyl-[ACP] = N-[(3R)-3-(hexadecanoyloxy)hexadecanoyl]-glycine + holo-[ACP]. It functions in the pathway lipid metabolism. Its function is as follows. Is involved in the production of glycine lipids (GL), which are phosphorus-free membrane lipids. Catalyzes the second step of GL biosynthesis, i.e. the O-acylation of the hydroxyl group of lyso-glycine lipids, resulting in the production of the mature diacylated glycine lipids. The sequence is that of Lyso-glycine lipid O-acyltransferase from Phocaeicola vulgatus (strain ATCC 8482 / DSM 1447 / JCM 5826 / CCUG 4940 / NBRC 14291 / NCTC 11154) (Bacteroides vulgatus).